Reading from the N-terminus, the 180-residue chain is Small ribosomal subunit protein uS4 (180 aa).

One can recognise an S4 RNA-binding domain in the interval 103 to 174; that stretch reads RRLQTIVYKK…HPERMMIEKA (72 aa).

This sequence belongs to the universal ribosomal protein uS4 family. As to quaternary structure, part of the 30S ribosomal subunit. Contacts protein S5. The interaction surface between S4 and S5 is involved in control of translational fidelity.

Functionally, one of the primary rRNA binding proteins, it binds directly to 16S rRNA where it nucleates assembly of the body of the 30S subunit. Its function is as follows. With S5 and S12 plays an important role in translational accuracy. This is Small ribosomal subunit protein uS4 from Pyrococcus horikoshii (strain ATCC 700860 / DSM 12428 / JCM 9974 / NBRC 100139 / OT-3).